Reading from the N-terminus, the 129-residue chain is N16.2 matrix protein (129 aa).

The signal sequence occupies residues 1 to 23 (MKCTLRWTITALVLLGICHLARP). Tandem repeats lie at residues 91–92 (NG), 93–94 (NG), 95–96 (DG), 97–98 (NG), and 99–100 (NG). The tract at residues 91-100 (NGNGDGNGNG) is 5 X 2 AA tandem repeats of N-G.

The protein belongs to the N16 matrix protein family. In terms of assembly, heterooligomer; disulfide-linked. Pif97, Pif80, N16 and other proteins form a complex. In terms of tissue distribution, component of conchiolin, the organic matrix of nacre. Expressed at extremely high levels in the dorsal region of the mantle, which region may be responsible for the nacreous layer formation, but only in trace amounts at the mantle edge, which region may be responsible for the prismatic layer formation.

It is found in the secreted. The protein localises to the extracellular space. It localises to the extracellular matrix. May be specifically involved in the formation of the nacreous layer. This chain is N16.2 matrix protein, found in Pinctada fucata (Akoya pearl oyster).